A 196-amino-acid polypeptide reads, in one-letter code: MKIGVLGLQGAVREHVRAIEACGAEAVIVKKPEQLEGLDGLVLPGGESTTMRRLIDRYGLMEPLKQFAAAGKPMFGTCAGLILLAKRIVGYDEPHLGLMDITVERNSFGRQRESFEAELSIKGVGDGFVGVFIRAPHIVEAGDGVDVLATYNDRIVAARQGQFLGCSFHPELTDDHRLMQYFLNMVKEAKMASSLK.

An L-glutamine-binding site is contributed by 46-48 (GES). The active-site Nucleophile is the Cys-78. Residues Arg-105 and 133 to 134 (IR) each bind L-glutamine. Catalysis depends on charge relay system residues His-169 and Glu-171.

Belongs to the glutaminase PdxT/SNO family. In the presence of PdxS, forms a dodecamer of heterodimers. Only shows activity in the heterodimer.

It carries out the reaction aldehydo-D-ribose 5-phosphate + D-glyceraldehyde 3-phosphate + L-glutamine = pyridoxal 5'-phosphate + L-glutamate + phosphate + 3 H2O + H(+). The enzyme catalyses L-glutamine + H2O = L-glutamate + NH4(+). The protein operates within cofactor biosynthesis; pyridoxal 5'-phosphate biosynthesis. Functionally, catalyzes the hydrolysis of glutamine to glutamate and ammonia as part of the biosynthesis of pyridoxal 5'-phosphate. The resulting ammonia molecule is channeled to the active site of PdxS. This is Pyridoxal 5'-phosphate synthase subunit PdxT from Geobacillus kaustophilus (strain HTA426).